The primary structure comprises 209 residues: Large ribosomal subunit protein uL3 (209 aa).

Gln-150 is subject to N5-methylglutamine.

The protein belongs to the universal ribosomal protein uL3 family. Part of the 50S ribosomal subunit. Forms a cluster with proteins L14 and L19. Methylated by PrmB.

Functionally, one of the primary rRNA binding proteins, it binds directly near the 3'-end of the 23S rRNA, where it nucleates assembly of the 50S subunit. In Vibrio parahaemolyticus serotype O3:K6 (strain RIMD 2210633), this protein is Large ribosomal subunit protein uL3.